Consider the following 166-residue polypeptide: Putative 4-hydroxy-4-methyl-2-oxoglutarate aldolase 2 (166 aa).

Position 2 is an N-acetylalanine (Ala-2). Substrate contacts are provided by residues 81–84 (GGNP) and Arg-103. Asp-104 contributes to the a divalent metal cation binding site.

It belongs to the class II aldolase/RraA-like family. As to quaternary structure, homotrimer. It depends on a divalent metal cation as a cofactor.

The enzyme catalyses 4-hydroxy-4-methyl-2-oxoglutarate = 2 pyruvate. It carries out the reaction oxaloacetate + H(+) = pyruvate + CO2. Its function is as follows. Catalyzes the aldol cleavage of 4-hydroxy-4-methyl-2-oxoglutarate (HMG) into 2 molecules of pyruvate. Also contains a secondary oxaloacetate (OAA) decarboxylase activity due to the common pyruvate enolate transition state formed following C-C bond cleavage in the retro-aldol and decarboxylation reactions. This chain is Putative 4-hydroxy-4-methyl-2-oxoglutarate aldolase 2, found in Arabidopsis thaliana (Mouse-ear cress).